We begin with the raw amino-acid sequence, 222 residues long: MTVVIGVLALQGAFIEHVRHVEKCIVENRDFYEKKLSVMTVKDKNQLAQCDALIIPGGESTAMSLIAERTGFYDDLYAFVHNPSKVTWGTCAGMIYISQQLSNEEKLVKTLNLLKVKVKRNAFGRQAQSSTRICDFSNFIPHCNDFPATFIRAPVIEEVLDPEHVQVLYKLDGKDNGGQELIVAAKQKNNILATSFHPELAENDIRFHDWFIREFVLKNYSK.

Residue 58 to 60 participates in L-glutamine binding; the sequence is GES. Residue Cys91 is the Nucleophile of the active site. Residues Arg120 and 151-152 each bind L-glutamine; that span reads IR. Residues His197 and Glu199 each act as charge relay system in the active site.

The protein belongs to the glutaminase PdxT/SNO family.

It carries out the reaction aldehydo-D-ribose 5-phosphate + D-glyceraldehyde 3-phosphate + L-glutamine = pyridoxal 5'-phosphate + L-glutamate + phosphate + 3 H2O + H(+). It catalyses the reaction L-glutamine + H2O = L-glutamate + NH4(+). It participates in cofactor biosynthesis; pyridoxal 5'-phosphate biosynthesis. Catalyzes the hydrolysis of glutamine to glutamate and ammonia as part of the biosynthesis of pyridoxal 5'-phosphate. The resulting ammonia molecule is channeled to the active site of a SNZ isoform. The protein is Probable pyridoxal 5'-phosphate synthase subunit SNO2 (SNO2) of Saccharomyces cerevisiae (strain ATCC 204508 / S288c) (Baker's yeast).